An 82-amino-acid chain; its full sequence is RNA-binding protein Hfq (82 aa).

Residues 10-69 (DPFLNALRREHVPVSIYLVNGIKLQGQIESFDQYVVLLRNTVTQMVYKHAISTIVPGRAV) form the Sm domain.

The protein belongs to the Hfq family. In terms of assembly, homohexamer.

Its function is as follows. RNA chaperone that binds small regulatory RNA (sRNAs) and mRNAs to facilitate mRNA translational regulation in response to envelope stress, environmental stress and changes in metabolite concentrations. Also binds with high specificity to tRNAs. In Albidiferax ferrireducens (strain ATCC BAA-621 / DSM 15236 / T118) (Rhodoferax ferrireducens), this protein is RNA-binding protein Hfq.